We begin with the raw amino-acid sequence, 317 residues long: Probable cell division protein WhiA (317 aa).

A DNA-binding region (H-T-H motif) is located at residues 281-314 (SLKELGKMLEPPVGKSGVNHRLRKIEKIAEELRK).

The protein belongs to the WhiA family.

Functionally, involved in cell division and chromosome segregation. The protein is Probable cell division protein WhiA of Clostridium acetobutylicum (strain ATCC 824 / DSM 792 / JCM 1419 / IAM 19013 / LMG 5710 / NBRC 13948 / NRRL B-527 / VKM B-1787 / 2291 / W).